We begin with the raw amino-acid sequence, 860 residues long: Glucans biosynthesis glucosyltransferase H (860 aa).

The next 6 membrane-spanning stretches (helical) occupy residues 141 to 161, 187 to 207, 515 to 535, 572 to 592, 599 to 619, and 682 to 702; these read FILL…MKGI, VLPY…FCWV, VFLT…FLVL, LFST…MLIW, FGGV…SVLL, and FLWW…VSVI.

This sequence belongs to the glycosyltransferase 2 family. OpgH subfamily.

It localises to the cell inner membrane. Its pathway is glycan metabolism; osmoregulated periplasmic glucan (OPG) biosynthesis. Its function is as follows. Involved in the biosynthesis of osmoregulated periplasmic glucans (OPGs). This Pseudomonas paraeruginosa (strain DSM 24068 / PA7) (Pseudomonas aeruginosa (strain PA7)) protein is Glucans biosynthesis glucosyltransferase H.